Consider the following 201-residue polypeptide: Guanylyl cyclase-activating protein 1 (201 aa).

Residue Gly2 is the site of N-myristoyl glycine attachment. The residue at position 3 (Asn3) is a Deamidated asparagine. EF-hand domains lie at 31–49, 51–86, 87–122, and 131–166; these read SGQL…KNLS, SASQ…VLKG, KVEQ…IRAI, and TAEE…DQML. Residues Asp64, Asn66, Asp68, Tyr70, Glu75, Asp100, Asp102, Asn104, Cys106, Glu111, Asp144, Asn146, Asp148, Glu150, and Glu155 each coordinate Ca(2+).

Homodimer. In terms of tissue distribution, in the retina, it is expressed in rod and cone photoreceptors.

It localises to the membrane. The protein localises to the photoreceptor inner segment. Its subcellular location is the cell projection. It is found in the cilium. The protein resides in the photoreceptor outer segment. In terms of biological role, stimulates retinal guanylyl cyclase when free calcium ions concentration is low and inhibits guanylyl cyclase when free calcium ions concentration is elevated. This Ca(2+)-sensitive regulation of retinal guanylyl cyclase is a key event in recovery of the dark state of rod photoreceptors following light exposure. May be involved in cone photoreceptor light response and recovery of response in bright light. This Homo sapiens (Human) protein is Guanylyl cyclase-activating protein 1 (GUCA1A).